The following is a 235-amino-acid chain: Orotidine 5'-phosphate decarboxylase (235 aa).

Residues D17, K39, 66–75, T121, R182, Q191, and R212 contribute to the substrate site; that span reads DMKLLDIDHT. Residue K68 is the Proton donor of the active site.

It belongs to the OMP decarboxylase family. Type 1 subfamily. In terms of assembly, homodimer.

It carries out the reaction orotidine 5'-phosphate + H(+) = UMP + CO2. It functions in the pathway pyrimidine metabolism; UMP biosynthesis via de novo pathway; UMP from orotate: step 2/2. Functionally, catalyzes the decarboxylation of orotidine 5'-monophosphate (OMP) to uridine 5'-monophosphate (UMP). This Bartonella bacilliformis protein is Orotidine 5'-phosphate decarboxylase.